The sequence spans 128 residues: Flagellar basal body rod protein FlgB (128 aa).

Belongs to the flagella basal body rod proteins family. In terms of assembly, the basal body constitutes a major portion of the flagellar organelle and consists of a number of rings mounted on a central rod. In Gram-negative bacteria, at least four rings, L, P, S and M are present, whereas Gram-positive bacteria lack the L and P rings. The rod consists of about 26 subunits of FlgG in the distal portion, and FlgB, FlgC and FlgF build up the proximal portion of the rod with about 6 subunits each. Rod assembly occurs by export via the flagellum-specific pathway of its constituent proteins and by their incorporation into the rod structure in the probable order of FlgB, FlgC, FlgF and FlgG. Another protein, FliE, also assembles onto the stable rod structure.

The protein resides in the bacterial flagellum basal body. In terms of biological role, structural component of flagellum, the bacterial motility apparatus. Part of the rod structure of flagellar basal body. In Cereibacter sphaeroides (strain ATCC 17029 / ATH 2.4.9) (Rhodobacter sphaeroides), this protein is Flagellar basal body rod protein FlgB.